The sequence spans 874 residues: Alanine--tRNA ligase (874 aa).

Zn(2+)-binding residues include His-562, His-566, Cys-664, and His-668.

Belongs to the class-II aminoacyl-tRNA synthetase family. Zn(2+) is required as a cofactor.

The protein resides in the cytoplasm. The catalysed reaction is tRNA(Ala) + L-alanine + ATP = L-alanyl-tRNA(Ala) + AMP + diphosphate. Its function is as follows. Catalyzes the attachment of alanine to tRNA(Ala) in a two-step reaction: alanine is first activated by ATP to form Ala-AMP and then transferred to the acceptor end of tRNA(Ala). Also edits incorrectly charged Ser-tRNA(Ala) and Gly-tRNA(Ala) via its editing domain. In Neisseria meningitidis serogroup A / serotype 4A (strain DSM 15465 / Z2491), this protein is Alanine--tRNA ligase.